A 109-amino-acid polypeptide reads, in one-letter code: Stress-response A/B barrel domain-containing protein HS1 (109 aa).

Positions 8–102 constitute a Stress-response A/B barrel domain; it reads VKHVLLASFK…SLDKVLVIDY (95 aa). Residues valine 36, isoleucine 39, glutamate 40, and methionine 42 each coordinate Mg(2+).

Homodimer. The cofactor is Mg(2+).

In terms of biological role, heat stable protein involved in defense against fungal pathogens. Possesses antifungal activity against diverse pathogenic fungi. Possesses antimicrobial activity. Possesses ribonuclease activity. This is Stress-response A/B barrel domain-containing protein HS1 from Arabidopsis thaliana (Mouse-ear cress).